The following is a 98-amino-acid chain: NADH-ubiquinone oxidoreductase chain 4L (98 aa).

3 helical membrane-spanning segments follow: residues 2–22 (PSIS…MLIF), 29–49 (SLLC…LTIL), and 61–81 (ILLL…LVTV).

Belongs to the complex I subunit 4L family. As to quaternary structure, core subunit of respiratory chain NADH dehydrogenase (Complex I) which is composed of 45 different subunits.

It is found in the mitochondrion inner membrane. It catalyses the reaction a ubiquinone + NADH + 5 H(+)(in) = a ubiquinol + NAD(+) + 4 H(+)(out). Its function is as follows. Core subunit of the mitochondrial membrane respiratory chain NADH dehydrogenase (Complex I) which catalyzes electron transfer from NADH through the respiratory chain, using ubiquinone as an electron acceptor. Part of the enzyme membrane arm which is embedded in the lipid bilayer and involved in proton translocation. This Eulemur mongoz (Mongoose lemur) protein is NADH-ubiquinone oxidoreductase chain 4L (MT-ND4L).